The chain runs to 476 residues: MASRIGLRMQLMREQAQQEEQRERMQQQAVMHYMQQQQQQQQQQLGGPPTPAINTPVHFQSPPPVPGEVLKVQSYLENPTSYHLQQSQHQKVREYLSETYGNKFAAHISPAQGSPKPPPAASPGVRAGHVLSSSAGNSAPNSPMAMLHIGSNPERELDDVIDNIMRLDDVLGYINPEMQMPNTLPLSSSHLNVYSSDPQVTASLVGVTSSSCPADLTQKRELTDAESRALAKERQKKDNHNLIERRRRFNINDRIKELGMLIPKANDLDVRWNKGTILKASVDYIRRMQKDLQKSRELENHSRRLEMTNKQLWLRIQELEMQARVHGLPTTSPSGMNMAELAQQVVKQELPSEEGPGEALMLGAEVPDPEPLPALPPQAPLPLPTQPPSPFHHLDFSHSLSFGGREDEGPPGYPEPLAPGHGSPFPSLSKKDLDLMLLDDSLLPLASDPLLSTMSPEASKASSRRSSFSMEEGDVL.

2 disordered regions span residues 1–66 (MASR…PPVP) and 107–142 (HISPAQGSPKPPPAASPGVRAGHVLSSSAGNSAPNS). Residues 1–167 (MASRIGLRMQ…DDVIDNIMRL (167 aa)) are interaction with ACSS2. The segment covering 26–44 (QQQAVMHYMQQQQQQQQQQ) has biased composition (low complexity). Phosphoserine is present on residues Ser109, Ser114, Ser122, and Ser138. Over residues 132-142 (SSSAGNSAPNS) the composition is skewed to low complexity. A Nuclear export signal motif is present at residues 136-153 (GNSAPNSPMAMLHIGSNP). Ser142 bears the Phosphoserine; by MTOR mark. The interval 156–165 (ELDDVIDNIM) is strong transcription activation domain. The residue at position 183 (Thr183) is a Phosphothreonine. Ser211 carries the phosphoserine; by MTOR modification. Position 212 is an S-(2,3-dicarboxypropyl)cysteine (Cys212). The 54-residue stretch at 235–288 (QKKDNHNLIERRRRFNINDRIKELGMLIPKANDLDVRWNKGTILKASVDYIRRM) folds into the bHLH domain. The Nuclear localization signal signature appears at 245–248 (RRRR). The tract at residues 298-319 (LENHSRRLEMTNKQLWLRIQEL) is leucine-zipper. Position 332 is a phosphoserine (Ser332). Residues 349-430 (ELPSEEGPGE…HGSPFPSLSK (82 aa)) are disordered. Over residues 369 to 390 (PEPLPALPPQAPLPLPTQPPSP) the composition is skewed to pro residues. Phosphoserine occurs at positions 423, 441, 466, 467, and 469. Residues 447–469 (SDPLLSTMSPEASKASSRRSSFS) are compositionally biased toward low complexity. The disordered stretch occupies residues 447 to 476 (SDPLLSTMSPEASKASSRRSSFSMEEGDVL).

The protein belongs to the MiT/TFE family. Homodimer and heterodimer; with TFE3 or MITF. Interacts (when phosphorylated by MTOR) with YWHAZ; promoting retention in the cytosol. Interacts with IRGM; promoting association between TFEB and PPP3CB and dephosphorylation. Interacts with small GTPases Rag (RagA/RRAGA, RagB/RRAGB, RagC/RRAGC and/or RagD/RRAGD); promoting its recruitment to lysosomal membrane in the presence of nutrients. Interacts with ACSS2. In terms of processing, phosphorylation at Ser-211 by MTOR via non-canonical mTORC1 pathway regulates its subcellular location and activity. When nutrients are present, phosphorylation by MTOR promotes association with 14-3-3/YWHA adapters and retention in the cytosol. Inhibition of mTORC1, starvation and lysosomal disruption, promotes dephosphorylation by calcineurin PPP3CB and translocation to the nucleus. Dephosphorylated by calcineurin PPP3CB in response to lysosomal Ca(2+) release. IRGM promotes dephosphorylation by calcineurin PPP3CB, resulting in TFEB nuclear translocation and stimulation of lysosomal biogenesis. Dephosphorylated by phosphatase PPP3CA following Coxsackievirus B3 infection, leading to nuclear translocation. Exported from the nucleus in a mTORC1-dependent manner in response to nutrient availability. Post-translationally, alkylated via a non-enzymatic covalent modification. Itaconate, an anti-inflammatory metabolite generated in response to lipopolysaccharide, alkylates Cys-212, preventing association with 14-3-3/YWHA adapters, thereby promoting nuclear translocation and activity. Sumoylated; does not affect dimerization with MITF. In terms of processing, (Microbial infection) Cleavage by Coxsackievirus B3 protease 3C after site Gln-60. This non-phosphorylated cleavage product retains its ability to interact with TFEB, TFE3 or MITF and presents impaired transcriptional activity, resulting in disruption of lysosomal functions and increased viral infection.

Its subcellular location is the nucleus. The protein localises to the cytoplasm. It is found in the cytosol. It localises to the lysosome membrane. Inhibited by eltrombopag drug, which binds to the bHLH domain and disrupts DNA-binding. In terms of biological role, transcription factor that acts as a master regulator of lysosomal biogenesis, autophagy, lysosomal exocytosis, lipid catabolism, energy metabolism and immune response. Specifically recognizes and binds E-box sequences (5'-CANNTG-3'); efficient DNA-binding requires dimerization with itself or with another MiT/TFE family member such as TFE3 or MITF. Involved in the cellular response to amino acid availability by acting downstream of MTOR: in the presence of nutrients, TFEB phosphorylation by MTOR promotes its cytosolic retention and subsequent inactivation. Upon starvation or lysosomal stress, inhibition of MTOR induces TFEB dephosphorylation, resulting in nuclear localization and transcription factor activity. Specifically recognizes and binds the CLEAR-box sequence (5'-GTCACGTGAC-3') present in the regulatory region of many lysosomal genes, leading to activate their expression, thereby playing a central role in expression of lysosomal genes. Regulates lysosomal positioning in response to nutrient deprivation by promoting the expression of PIP4P1. Acts as a positive regulator of autophagy by promoting expression of genes involved in autophagy. In association with TFE3, activates the expression of CD40L in T-cells, thereby playing a role in T-cell-dependent antibody responses in activated CD4(+) T-cells and thymus-dependent humoral immunity. Specifically recognizes the gamma-E3 box, a subset of E-boxes, present in the heavy-chain immunoglobulin enhancer. Plays a role in the signal transduction processes required for normal vascularization of the placenta. Involved in the immune response to infection by the bacteria S.aureus, S.typhimurium or S.enterica: infection promotes itaconate production, leading to alkylation, resulting in nuclear localization and transcription factor activity. Itaconate-mediated alkylation activates TFEB-dependent lysosomal biogenesis, facilitating the bacteria clearance during the antibacterial innate immune response. In association with ACSS2, promotes the expression of genes involved in lysosome biogenesis and both autophagy upon glucose deprivation. In Homo sapiens (Human), this protein is Transcription factor EB.